Consider the following 200-residue polypeptide: ATP-dependent Clp protease proteolytic subunit 2 (200 aa).

Catalysis depends on Ser101, which acts as the Nucleophile. His126 is an active-site residue.

It belongs to the peptidase S14 family. As to quaternary structure, fourteen ClpP subunits assemble into 2 heptameric rings which stack back to back to give a disk-like structure with a central cavity, resembling the structure of eukaryotic proteasomes.

It is found in the cytoplasm. It catalyses the reaction Hydrolysis of proteins to small peptides in the presence of ATP and magnesium. alpha-casein is the usual test substrate. In the absence of ATP, only oligopeptides shorter than five residues are hydrolyzed (such as succinyl-Leu-Tyr-|-NHMec, and Leu-Tyr-Leu-|-Tyr-Trp, in which cleavage of the -Tyr-|-Leu- and -Tyr-|-Trp bonds also occurs).. In terms of biological role, cleaves peptides in various proteins in a process that requires ATP hydrolysis. Has a chymotrypsin-like activity. Plays a major role in the degradation of misfolded proteins. This chain is ATP-dependent Clp protease proteolytic subunit 2, found in Prochlorococcus marinus (strain NATL2A).